The sequence spans 388 residues: Ribonucleoside-diphosphate reductase subunit beta (388 aa).

Fe cation is bound by residues Asp-84, Glu-115, and His-118. The active site involves Tyr-122. Glu-212, Glu-247, and His-250 together coordinate Fe cation.

This sequence belongs to the ribonucleoside diphosphate reductase small chain family. Heterodimer of a large and a small subunit. The cofactor is Fe cation.

It catalyses the reaction a 2'-deoxyribonucleoside 5'-diphosphate + [thioredoxin]-disulfide + H2O = a ribonucleoside 5'-diphosphate + [thioredoxin]-dithiol. In terms of biological role, provides the precursors necessary for DNA synthesis. Catalyzes the biosynthesis of deoxyribonucleotides from the corresponding ribonucleotides. The sequence is that of Ribonucleoside-diphosphate reductase subunit beta (NRDB) from Escherichia coli (Bacteriophage T4).